Here is a 464-residue protein sequence, read N- to C-terminus: Heterogeneous nuclear ribonucleoprotein K (464 aa).

M1 carries the post-translational modification N-acetylmethionine. Residues 1–37 (METEQPEETFPNTETNGEFGKRPAEDMEEEQAFKRSR) are disordered. Residues 1 to 276 (METEQPEETF…GRGGRPMPPS (276 aa)) are necessary for interaction with DDX1. Residues 19 to 37 (FGKRPAEDMEEEQAFKRSR) are compositionally biased toward basic and acidic residues. Residue K34 is modified to N6-acetyllysine; alternate. K34 is covalently cross-linked (Glycyl lysine isopeptide (Lys-Gly) (interchain with G-Cter in SUMO1); alternate). K34 participates in a covalent cross-link: Glycyl lysine isopeptide (Lys-Gly) (interchain with G-Cter in SUMO2); alternate. A Phosphoserine modification is found at S36. Residue T39 is modified to Phosphothreonine. In terms of domain architecture, KH 1 spans 42-104 (MVELRILLQS…ETIGEILKKI (63 aa)). Residues K52 and K60 each participate in a glycyl lysine isopeptide (Lys-Gly) (interchain with G-Cter in SUMO2) cross-link. Repeat copies occupy residues 54–76 (AGAV…NASV) and 59–62 (GKGG). The 2 X 22 AA approximate repeats stretch occupies residues 54–421 (AGAVIGKGGK…QIRHESGASI (368 aa)). The 5 X 4 AA repeats of G-X-G-G stretch occupies residues 59-407 (GKGGKNIKAL…LAGSIIGKGG (349 aa)). Phosphoserine is present on residues S75 and S116. In terms of domain architecture, KH 2 spans 144–209 (DCELRLLIHQ…DRVVECIKII (66 aa)). Residue K163 forms a Glycyl lysine isopeptide (Lys-Gly) (interchain with G-Cter in SUMO1); alternate linkage. A Glycyl lysine isopeptide (Lys-Gly) (interchain with G-Cter in SUMO2); alternate cross-link involves residue K163. The residue at position 198 (K198) is an N6-acetyllysine. Phosphoserine is present on residues S214 and S216. A Glycyl lysine isopeptide (Lys-Gly) (interchain with G-Cter in SUMO2); alternate cross-link involves residue K219. The residue at position 219 (K219) is an N6-succinyllysine; alternate. The interval 236 to 273 (YGGFTMMFDDRRGRPVGFPMRGRGGFDRMPPGRGGRPM) is RNA-binding RGG-box. 3 repeat units span residues 245 to 250 (DRRGRP), 257 to 260 (GRGG), and 267 to 270 (GRGG). A 2 X 6 AA approximate repeats region spans residues 245-329 (DRRGRPVGFP…LMAYDRRGRP (85 aa)). The interval 250-329 (PVGFPMRGRG…LMAYDRRGRP (80 aa)) is disordered. The segment covering 252–266 (GFPMRGRGGFDRMPP) has biased composition (low complexity). Over residues 276–285 (SRRDYDDMSP) the composition is skewed to basic and acidic residues. Residue S284 is modified to Phosphoserine. One copy of the 3-4 repeat lies at 295–298 (GRGG). Residue R316 is modified to Omega-N-methylarginine. The stretch at 324–329 (DRRGRP) is one 2-2 repeat. R377 is subject to Omega-N-methylarginine. Position 379 is a phosphoserine (S379). Y380 carries the phosphotyrosine modification. The KH 3 domain occupies 387 to 451 (IITTQVTIPK…DQIQNAQYLL (65 aa)). A run of 2 repeats spans residues 399–421 (AGSI…GASI) and 404–407 (GKGG). An N6-acetyllysine; alternate modification is found at K405. K405 is covalently cross-linked (Glycyl lysine isopeptide (Lys-Gly) (interchain with G-Cter in SUMO2); alternate). Phosphoserine is present on S420. Residue K422 forms a Glycyl lysine isopeptide (Lys-Gly) (interchain with G-Cter in SUMO1); alternate linkage. A Glycyl lysine isopeptide (Lys-Gly) (interchain with G-Cter in SUMO2); alternate cross-link involves residue K422. A Glycyl lysine isopeptide (Lys-Gly) (interchain with G-Cter in SUMO); alternate cross-link involves residue K422.

Identified in the spliceosome C complex. Interacts with ANKRD28, RBM42 and ZIK1. Interacts with DDX1. Interacts with MDM2; this interaction leads to ubiquitination and proteasomal degradation. Interacts with p53/TP53. Interacts with BRDT. Interacts with IVNS1ABP. Interacts with PPIA/CYPA. Part of a transcription inhibitory ribonucleoprotein complex composed at least of the circular RNA circZNF827, ZNF827 and HNRNPL. In terms of processing, sumoylated by CBX4. Sumoylation is increased upon DNA damage, such as that produced by doxorubicin, etoposide, UV light and camptothecin, due to enhanced CBX4 phosphorylation by HIPK2 under these conditions. Post-translationally, ubiquitinated by MDM2. Doxorubicin treatment does not affect monoubiquitination, but slightly decreases HNRNPK poly-ubiquitination. O-glycosylated (O-GlcNAcylated), in a cell cycle-dependent manner.

Its subcellular location is the cytoplasm. It localises to the nucleus. The protein localises to the nucleoplasm. It is found in the cell projection. The protein resides in the podosome. Functionally, one of the major pre-mRNA-binding proteins. Binds tenaciously to poly(C) sequences. Likely to play a role in the nuclear metabolism of hnRNAs, particularly for pre-mRNAs that contain cytidine-rich sequences. Can also bind poly(C) single-stranded DNA. Plays an important role in p53/TP53 response to DNA damage, acting at the level of both transcription activation and repression. When sumoylated, acts as a transcriptional coactivator of p53/TP53, playing a role in p21/CDKN1A and 14-3-3 sigma/SFN induction. As far as transcription repression is concerned, acts by interacting with long intergenic RNA p21 (lincRNA-p21), a non-coding RNA induced by p53/TP53. This interaction is necessary for the induction of apoptosis, but not cell cycle arrest. As part of a ribonucleoprotein complex composed at least of ZNF827, HNRNPL and the circular RNA circZNF827 that nucleates the complex on chromatin, may negatively regulate the transcription of genes involved in neuronal differentiation. The protein is Heterogeneous nuclear ribonucleoprotein K (HNRNPK) of Macaca fascicularis (Crab-eating macaque).